Here is a 408-residue protein sequence, read N- to C-terminus: Phosphoglycerate kinase (408 aa).

Residues aspartate 22 to asparagine 24, arginine 39, histidine 60 to arginine 63, arginine 117, and arginine 157 contribute to the substrate site. Residues glutamate 332 and glycine 358 to threonine 361 contribute to the ATP site.

The protein belongs to the phosphoglycerate kinase family. Monomer.

Its subcellular location is the cytoplasm. It catalyses the reaction (2R)-3-phosphoglycerate + ATP = (2R)-3-phospho-glyceroyl phosphate + ADP. It participates in carbohydrate degradation; glycolysis; pyruvate from D-glyceraldehyde 3-phosphate: step 2/5. The chain is Phosphoglycerate kinase from Thermoplasma volcanium (strain ATCC 51530 / DSM 4299 / JCM 9571 / NBRC 15438 / GSS1).